Consider the following 69-residue polypeptide: uncharacterized protein (69 aa).

The HTH cro/C1-type domain maps to 5 to 60; the sequence is IREHRKELGLTQEELAERVGVTRQTIIALEKGRYSPSLILAHRIARALGREHIEDI. Residues 16–35 constitute a DNA-binding region (H-T-H motif); that stretch reads QEELAERVGVTRQTIIALEK.

This is an uncharacterized protein from Methanothermobacter thermautotrophicus (strain ATCC 29096 / DSM 1053 / JCM 10044 / NBRC 100330 / Delta H) (Methanobacterium thermoautotrophicum).